Reading from the N-terminus, the 228-residue chain is Large ribosomal subunit protein bL25 (228 aa).

The segment at 198 to 228 (AAIAEAQSAEAAEEKAEAEAEATNEKNDTEE) is disordered. The segment covering 209-228 (AEEKAEAEAEATNEKNDTEE) has biased composition (basic and acidic residues).

This sequence belongs to the bacterial ribosomal protein bL25 family. CTC subfamily. As to quaternary structure, part of the 50S ribosomal subunit; part of the 5S rRNA/L5/L18/L25 subcomplex. Contacts the 5S rRNA. Binds to the 5S rRNA independently of L5 and L18.

Functionally, this is one of the proteins that binds to the 5S RNA in the ribosome where it forms part of the central protuberance. The sequence is that of Large ribosomal subunit protein bL25 from Methylorubrum populi (strain ATCC BAA-705 / NCIMB 13946 / BJ001) (Methylobacterium populi).